Here is a 156-residue protein sequence, read N- to C-terminus: Small ribosomal subunit protein uS7 (156 aa).

Belongs to the universal ribosomal protein uS7 family. As to quaternary structure, part of the 30S ribosomal subunit. Contacts proteins S9 and S11.

One of the primary rRNA binding proteins, it binds directly to 16S rRNA where it nucleates assembly of the head domain of the 30S subunit. Is located at the subunit interface close to the decoding center, probably blocks exit of the E-site tRNA. The sequence is that of Small ribosomal subunit protein uS7 from Sphingopyxis alaskensis (strain DSM 13593 / LMG 18877 / RB2256) (Sphingomonas alaskensis).